Reading from the N-terminus, the 321-residue chain is Hex-5-enoyl-[acyl-carrier protein] acetylenase (321 aa).

2 consecutive transmembrane segments (helical) span residues Phe36–Trp56 and Val62–Leu82. The short motif at His83 to His88 is the Histidine box-1 element. Residues Val99–Val119 form a helical membrane-spanning segment. The Histidine box-2 motif lies at His120–His124. A helical membrane pass occupies residues Tyr188–Gly208. Residues Gln269 to His273 carry the Histidine box-3 motif.

The protein belongs to the fatty acid desaturase type 2 family. It depends on Fe(2+) as a cofactor.

It is found in the membrane. The enzyme catalyses 5-hexenoyl-[ACP] + 2 reduced [2Fe-2S]-[ferredoxin] + O2 + 2 H(+) = 5-hexynoyl-[ACP] + 2 oxidized [2Fe-2S]-[ferredoxin] + 2 H2O. The catalysed reaction is hexanoyl-[ACP] + 2 reduced [2Fe-2S]-[ferredoxin] + O2 + 2 H(+) = 5-hexenoyl-[ACP] + 2 oxidized [2Fe-2S]-[ferredoxin] + 2 H2O. In terms of biological role, desaturase involved in the biosynthesis of jamaicamides, which show sodium channel blocking activity and fish toxicity. Catalyzes the conversion of 5-hexenoyl loaded onto the acyl carrier protein JamC (5-hexenoyl-JamC) to 5-hexynoyl-JamC. Can also catalyze the conversion of hexanoyl-JamC to 5-hexenoyl-JamC, but it cannot use free 5-hexenoic acid, 5-hexenoyl-CoA, 2-hexenoyl-JamC, 3-hexenoyl-JamC or 4-hexenoyl-JamC. Is specific for C(6) chains, and cannot use 4-pentenoyl-JamC, 6-heptenoyl-JamC or 7-octenoyl-JamC as substrate. The chain is Hex-5-enoyl-[acyl-carrier protein] acetylenase from Moorena producens (strain JHB).